Reading from the N-terminus, the 242-residue chain is DNA repair protein RecO (242 aa).

The protein belongs to the RecO family.

Involved in DNA repair and RecF pathway recombination. The polypeptide is DNA repair protein RecO (Nitrosospira multiformis (strain ATCC 25196 / NCIMB 11849 / C 71)).